The following is a 264-amino-acid chain: Thymidylate synthase 2 (264 aa).

Residue Arg21 coordinates dUMP. His51 contacts (6R)-5,10-methylene-5,6,7,8-tetrahydrofolate. 126–127 is a dUMP binding site; sequence RR. Catalysis depends on Cys146, which acts as the Nucleophile. DUMP contacts are provided by residues 166-169, Asn177, and 207-209; these read RSAD and HIY. Asp169 contributes to the (6R)-5,10-methylene-5,6,7,8-tetrahydrofolate binding site. Ser263 contacts (6R)-5,10-methylene-5,6,7,8-tetrahydrofolate.

The protein belongs to the thymidylate synthase family. Bacterial-type ThyA subfamily. As to quaternary structure, homodimer.

Its subcellular location is the cytoplasm. The catalysed reaction is dUMP + (6R)-5,10-methylene-5,6,7,8-tetrahydrofolate = 7,8-dihydrofolate + dTMP. The protein operates within pyrimidine metabolism; dTTP biosynthesis. Functionally, catalyzes the reductive methylation of 2'-deoxyuridine-5'-monophosphate (dUMP) to 2'-deoxythymidine-5'-monophosphate (dTMP) while utilizing 5,10-methylenetetrahydrofolate (mTHF) as the methyl donor and reductant in the reaction, yielding dihydrofolate (DHF) as a by-product. This enzymatic reaction provides an intracellular de novo source of dTMP, an essential precursor for DNA biosynthesis. In Bacillus subtilis (strain 168), this protein is Thymidylate synthase 2.